Here is a 260-residue protein sequence, read N- to C-terminus: uncharacterized protein (260 aa).

It belongs to the methyltransferase superfamily.

It is found in the cytoplasm. The protein resides in the nucleus. Functionally, probable methyltransferase. This is an uncharacterized protein from Schizosaccharomyces pombe (strain 972 / ATCC 24843) (Fission yeast).